Here is a 790-residue protein sequence, read N- to C-terminus: LPS-assembly protein LptD (790 aa).

A signal peptide spans 1-20 (MRMLRWLILSAFSVAGAVQA).

Belongs to the LptD family. As to quaternary structure, component of the lipopolysaccharide transport and assembly complex. Interacts with LptE and LptA.

It is found in the cell outer membrane. Its function is as follows. Together with LptE, is involved in the assembly of lipopolysaccharide (LPS) at the surface of the outer membrane. The chain is LPS-assembly protein LptD from Bordetella bronchiseptica (strain ATCC BAA-588 / NCTC 13252 / RB50) (Alcaligenes bronchisepticus).